The primary structure comprises 211 residues: LexA repressor (211 aa).

Residues 27–47 (QTEIARAFGFKGVRAVQHHLD) constitute a DNA-binding region (H-T-H motif). Residues serine 131 and lysine 168 each act as for autocatalytic cleavage activity in the active site.

This sequence belongs to the peptidase S24 family. Homodimer.

It carries out the reaction Hydrolysis of Ala-|-Gly bond in repressor LexA.. In terms of biological role, represses a number of genes involved in the response to DNA damage (SOS response), including recA and lexA. In the presence of single-stranded DNA, RecA interacts with LexA causing an autocatalytic cleavage which disrupts the DNA-binding part of LexA, leading to derepression of the SOS regulon and eventually DNA repair. The protein is LexA repressor of Xylella fastidiosa (strain M23).